Consider the following 832-residue polypeptide: Cytosolic carboxypeptidase-like protein 5 (832 aa).

Residues 27–50 (TVPSDGEGVGGAATAPTSGSASSP) are disordered. Over residues 38 to 50 (AATAPTSGSASSP) the composition is skewed to low complexity. The 415-residue stretch at 157–571 (YPFSYSDCQD…ALAIAALDMA (415 aa)) folds into the Peptidase M14 domain. Positions 252 and 255 each coordinate Zn(2+). Low complexity predominate over residues 343–354 (NSKNPSNQQPSS). 2 disordered regions span residues 343–362 (NSKN…PEVP) and 376–402 (LHLG…KTDP). Over residues 384–401 (GENHDRWTETEPTEEKTD) the composition is skewed to basic and acidic residues. His-435 serves as a coordination point for Zn(2+). Glu-517 (proton donor/acceptor) is an active-site residue. Residues 606-752 (STANVGLNKK…ASPTSSRNMG (147 aa)) are disordered. The span at 621 to 636 (PPKSNNGLPVSCSENA) shows a compositional bias: polar residues. Positions 644–654 (STGTSTGGSSS) are enriched in low complexity. Residues 655–666 (QQNSPQMKNSPS) are compositionally biased toward polar residues. The span at 708–752 (QQQQQQQQQQQQQQQQPLNQRSTTSSLAPSPTLASASPTSSRNMG) shows a compositional bias: low complexity.

This sequence belongs to the peptidase M14 family. It depends on Zn(2+) as a cofactor.

The protein resides in the cytoplasm. Its subcellular location is the cytosol. It localises to the nucleus. It is found in the cytoskeleton. The protein localises to the spindle. The protein resides in the midbody. It carries out the reaction gamma-L-glutamyl-L-glutamyl-[protein] + H2O = L-glutamyl-[protein] + L-glutamate. The enzyme catalyses (L-glutamyl)(n+1)-gamma-L-glutamyl-L-glutamyl-[protein] + H2O = (L-glutamyl)(n)-gamma-L-glutamyl-L-glutamyl-[protein] + L-glutamate. The catalysed reaction is C-terminal L-alpha-aminoacyl-L-glutamyl-[tubulin] + H2O = C-terminal L-alpha-aminoacyl-[tubulin] + L-glutamate. It catalyses the reaction C-terminal L-alpha-aminoacyl-L-glutamyl-L-glutamyl-[tubulin] + H2O = C-terminal L-alpha-aminoacyl-L-glutamyl-[tubulin] + L-glutamate. Metallocarboxypeptidase that mediates deglutamylation of tubulin and non-tubulin target proteins. Catalyzes the removal of polyglutamate side chains present on the gamma-carboxyl group of glutamate residues within the C-terminal tail of alpha- and beta-tubulin. Cleaves alpha- and gamma-linked polyglutamate tubulin side-chain, as well as the branching point glutamate. Also catalyzes the removal of alpha-linked glutamate residues from the carboxy-terminus of alpha-tubulin. Mediates deglutamylation of nucleotidyltransferase CGAS, leading to CGAS antiviral defense response activation. The polypeptide is Cytosolic carboxypeptidase-like protein 5 (Agbl5) (Rattus norvegicus (Rat)).